An 89-amino-acid polypeptide reads, in one-letter code: Small ribosomal subunit protein uS15 (89 aa).

The protein belongs to the universal ribosomal protein uS15 family. In terms of assembly, part of the 30S ribosomal subunit. Forms a bridge to the 50S subunit in the 70S ribosome, contacting the 23S rRNA.

Functionally, one of the primary rRNA binding proteins, it binds directly to 16S rRNA where it helps nucleate assembly of the platform of the 30S subunit by binding and bridging several RNA helices of the 16S rRNA. Its function is as follows. Forms an intersubunit bridge (bridge B4) with the 23S rRNA of the 50S subunit in the ribosome. This chain is Small ribosomal subunit protein uS15, found in Yersinia enterocolitica serotype O:8 / biotype 1B (strain NCTC 13174 / 8081).